A 142-amino-acid polypeptide reads, in one-letter code: Large ribosomal subunit protein uL13 (142 aa).

The protein belongs to the universal ribosomal protein uL13 family. In terms of assembly, part of the 50S ribosomal subunit.

Functionally, this protein is one of the early assembly proteins of the 50S ribosomal subunit, although it is not seen to bind rRNA by itself. It is important during the early stages of 50S assembly. The chain is Large ribosomal subunit protein uL13 from Alteromonas mediterranea (strain DSM 17117 / CIP 110805 / LMG 28347 / Deep ecotype).